Consider the following 399-residue polypeptide: MVKSITLVGSTGSIGTQTLDIVSQYPDQFRIVGLAAGSNVEMLAEQIRQFRPQIAAISAAEKLPALQAAIKDLDPQPILLGGEAGVIEVARYGDAETVVTGIVGCAGLLPTIAAIEAGKDIALANKETLIAGGPVVLPLVEKHGVKLLPADSEHSAIFQCLQGVPKGGLKKILLTASGGAFRDWDVERLAEVTVSDALKHPNWSMGRKITVDSATLMNKGLEVIEAHFLFGLDYQDIEIVIHPQSIIHSLIELQDTSVLAQLGWPDMRLPLLYALSWPERIYTDWERLNLVKAGNLTFREPDHQKYPCMQLAYAAGRAGGSMPAVLNAANEQVVALFLDEKIKFLDIPRCIELVCDRHQNDNCANPSLDDILAADQWARQEVLTATKNLASQPQIISVN.

7 residues coordinate NADPH: Thr-11, Gly-12, Ser-13, Ile-14, Gly-37, Asn-39, and Asn-125. Lys-126 is a binding site for 1-deoxy-D-xylulose 5-phosphate. Residue Glu-127 participates in NADPH binding. Asp-151 is a Mn(2+) binding site. Residues Ser-152, Glu-153, Ser-177, and His-200 each contribute to the 1-deoxy-D-xylulose 5-phosphate site. Mn(2+) is bound at residue Glu-153. Gly-206 provides a ligand contact to NADPH. Ser-213, Asn-218, Lys-219, and Glu-222 together coordinate 1-deoxy-D-xylulose 5-phosphate. Glu-222 lines the Mn(2+) pocket.

This sequence belongs to the DXR family. Requires Mg(2+) as cofactor. It depends on Mn(2+) as a cofactor.

It carries out the reaction 2-C-methyl-D-erythritol 4-phosphate + NADP(+) = 1-deoxy-D-xylulose 5-phosphate + NADPH + H(+). It functions in the pathway isoprenoid biosynthesis; isopentenyl diphosphate biosynthesis via DXP pathway; isopentenyl diphosphate from 1-deoxy-D-xylulose 5-phosphate: step 1/6. Functionally, catalyzes the NADPH-dependent rearrangement and reduction of 1-deoxy-D-xylulose-5-phosphate (DXP) to 2-C-methyl-D-erythritol 4-phosphate (MEP). The protein is 1-deoxy-D-xylulose 5-phosphate reductoisomerase of Nostoc sp. (strain PCC 7120 / SAG 25.82 / UTEX 2576).